Reading from the N-terminus, the 353-residue chain is Chorismate synthase (353 aa).

NADP(+)-binding residues include Arg48 and Arg54. Residues 125–127 (RSS), 238–239 (NA), Gly278, 293–297 (KPTSS), and Arg319 each bind FMN.

Belongs to the chorismate synthase family. As to quaternary structure, homotetramer. It depends on FMNH2 as a cofactor.

It carries out the reaction 5-O-(1-carboxyvinyl)-3-phosphoshikimate = chorismate + phosphate. Its pathway is metabolic intermediate biosynthesis; chorismate biosynthesis; chorismate from D-erythrose 4-phosphate and phosphoenolpyruvate: step 7/7. Catalyzes the anti-1,4-elimination of the C-3 phosphate and the C-6 proR hydrogen from 5-enolpyruvylshikimate-3-phosphate (EPSP) to yield chorismate, which is the branch point compound that serves as the starting substrate for the three terminal pathways of aromatic amino acid biosynthesis. This reaction introduces a second double bond into the aromatic ring system. In Bordetella bronchiseptica (strain ATCC BAA-588 / NCTC 13252 / RB50) (Alcaligenes bronchisepticus), this protein is Chorismate synthase.